The chain runs to 370 residues: Glutathione S-transferase omega-like 2 (370 aa).

Arginine 15 serves as a coordination point for glutathione. Cysteine 46 acts as the Nucleophile in catalysis. The glutathione site is built by tryptophan 79, arginine 155, valine 158, glutamate 173, and serine 174. Residues proline 201 to isoleucine 353 enclose the GST C-terminal domain.

This sequence belongs to the GST superfamily. Omega family. Homodimer.

The protein localises to the cytoplasm. The enzyme catalyses RX + glutathione = an S-substituted glutathione + a halide anion + H(+). It catalyses the reaction L-dehydroascorbate + 2 glutathione = glutathione disulfide + L-ascorbate. Active as '1-Cys' thiol transferase against beta-hydroxyethyl disulfide (HED), as dehydroascorbate reductase and as dimethylarsinic acid reductase, while not active against the standard GST substrate 1-chloro-2,4-dinitrobenzene (CDNB). May be involved in cell wall organization and biogenesis. This chain is Glutathione S-transferase omega-like 2, found in Saccharomyces cerevisiae (strain ATCC 204508 / S288c) (Baker's yeast).